A 437-amino-acid chain; its full sequence is GTPase Der (437 aa).

2 consecutive EngA-type G domains span residues 3 to 167 and 177 to 353; these read ALVA…PAEN and PRIA…AHRS. GTP is bound by residues 9 to 16, 56 to 60, 119 to 122, 183 to 190, 230 to 234, and 295 to 298; these read GRPNVGKS, DTGGW, NKVD, GRPNAGKS, DTAGI, and NKWD. One can recognise a KH-like domain in the interval 354 to 437; it reads TRIPTHKLNE…TPINIFIREK (84 aa).

The protein belongs to the TRAFAC class TrmE-Era-EngA-EngB-Septin-like GTPase superfamily. EngA (Der) GTPase family. In terms of assembly, associates with the 50S ribosomal subunit.

Its function is as follows. GTPase that plays an essential role in the late steps of ribosome biogenesis. The sequence is that of GTPase Der from Porphyromonas gingivalis (strain ATCC BAA-308 / W83).